The sequence spans 230 residues: Phosphoribosylaminoimidazole-succinocarboxamide synthase (230 aa).

The protein belongs to the SAICAR synthetase family.

It catalyses the reaction 5-amino-1-(5-phospho-D-ribosyl)imidazole-4-carboxylate + L-aspartate + ATP = (2S)-2-[5-amino-1-(5-phospho-beta-D-ribosyl)imidazole-4-carboxamido]succinate + ADP + phosphate + 2 H(+). The protein operates within purine metabolism; IMP biosynthesis via de novo pathway; 5-amino-1-(5-phospho-D-ribosyl)imidazole-4-carboxamide from 5-amino-1-(5-phospho-D-ribosyl)imidazole-4-carboxylate: step 1/2. In Thermotoga sp. (strain RQ2), this protein is Phosphoribosylaminoimidazole-succinocarboxamide synthase.